Consider the following 385-residue polypeptide: uncharacterized protein (385 aa).

The protein belongs to the phage portal family. HK97 subfamily.

This is an uncharacterized protein from Rickettsia bellii (strain RML369-C).